An 89-amino-acid chain; its full sequence is Small ribosomal subunit protein uS15 (89 aa).

The protein belongs to the universal ribosomal protein uS15 family. In terms of assembly, part of the 30S ribosomal subunit. Forms a bridge to the 50S subunit in the 70S ribosome, contacting the 23S rRNA.

One of the primary rRNA binding proteins, it binds directly to 16S rRNA where it helps nucleate assembly of the platform of the 30S subunit by binding and bridging several RNA helices of the 16S rRNA. Functionally, forms an intersubunit bridge (bridge B4) with the 23S rRNA of the 50S subunit in the ribosome. The protein is Small ribosomal subunit protein uS15 of Bacillus anthracis (strain CDC 684 / NRRL 3495).